A 997-amino-acid chain; its full sequence is MERDEYQLPNSHGKNTFLSRIFGLQSDEVNPSLNSQEMSNFPLPDIERGSSLLHSTNDSREDVDENDLRVPESDQGTSTEEEDEVDEEQVQAYAPQISDGLNGDHQLNSVTSKENVLETEKSNLERLVEGSTDDSVPKVGQLSSEEEEDNEFINNDGFDDDTPLFQKSKIHEFSSKKSNTIEDGKRPLFFRHIYQNNRPQRDTQKLFTSSNAIHHDKDKSANNGPRNINGNQKHGTKYFGSATQPRFTGSPLNNTNRFTKLFPLRKPNLLSNISVLNNTPEDRINTLSVKERALWKWANVENLDIFLQDVYNYYLGNGFYCIILEKILNICTLLFVVFVSTYMGHCVDYSKLPTSHRVSDIIIDKCYSNSITGFTKFFLWMFYFFVILKIVQLYFDVQKLSELQNFYKYLLNISDDELQTLPWQNVIQQLMYLKDQNAMTANVVEVKAKNRIDAHDVANRIMRRENYLIALYNSDILNLSLPIPLFRTNVLTKTLEWNINLCVMGFVFNESGFIKQSILKPSQREFTREELQKRFMLAGFLNIILAPFLVTYFVLLYFFRYFNEYKTSPGSIGARQYTPIAEWKFREYNELYHIFKKRISLSTTLANKYVDQFPKEKTNLFLKFVSFICGSFVAILAFLTVFDPENFLNFEITSDRSVIFYITILGAIWSVSRNTITQEYHVFDPEETLKELYEYTHYLPKEWEGRYHKEEIKLEFCKLYNLRIVILLRELTSLMITPFVLWFSLPSSAGRIVDFFRENSEYVDGLGYVCKYAMFNMKNIDGEDTHSMDEDSLTKKIAVNGSHTLNSKRRSKFTAEDHSDKDLANNKMLQSYVYFMDDYSNSENLTGKYQLPAKKGYPNNEGDSFLNNKYSWRKQFQPGQKPELFRIGKHALGPGHNISPAIYSTRNPGKNWDNNNNGDDIKNGTNNATAKNDDNNGNNDHEYVLTESFLDSGAFPNHDVIDHNKMLNSNYNGNGILNKGGVLGLVKEYYKKSDVGR.

Topologically, residues 1-318 (MERDEYQLPN…DVYNYYLGNG (318 aa)) are cytoplasmic. Ser-19 carries the phosphoserine modification. A compositionally biased stretch (polar residues) spans 29–39 (VNPSLNSQEMS). Positions 29 to 88 (VNPSLNSQEMSNFPLPDIERGSSLLHSTNDSREDVDENDLRVPESDQGTSTEEEDEVDEE) are disordered. The span at 79–88 (TEEEDEVDEE) shows a compositional bias: acidic residues. Residues Lys-113 and Lys-121 each participate in a glycyl lysine isopeptide (Lys-Gly) (interchain with G-Cter in ubiquitin) cross-link. Ser-122 carries the phosphoserine modification. 2 disordered regions span residues 127 to 159 (LVEGSTDDSVPKVGQLSSEEEEDNEFINNDGFD) and 214 to 234 (HHDKDKSANNGPRNINGNQKH). Lys-138 is covalently cross-linked (Glycyl lysine isopeptide (Lys-Gly) (interchain with G-Cter in ubiquitin)). Residues Ser-143 and Ser-144 each carry the phosphoserine modification. The span at 144-159 (SEEEEDNEFINNDGFD) shows a compositional bias: acidic residues. Positions 221–233 (ANNGPRNINGNQK) are enriched in polar residues. A helical transmembrane segment spans residues 319 to 339 (FYCIILEKILNICTLLFVVFV). The Lumenal portion of the chain corresponds to 340-376 (STYMGHCVDYSKLPTSHRVSDIIIDKCYSNSITGFTK). Residues 377–397 (FFLWMFYFFVILKIVQLYFDV) form a helical membrane-spanning segment. Topologically, residues 398–538 (QKLSELQNFY…EELQKRFMLA (141 aa)) are cytoplasmic. An intramembrane segment occupies 539–559 (GFLNIILAPFLVTYFVLLYFF). The Cytoplasmic segment spans residues 560 to 620 (RYFNEYKTSP…DQFPKEKTNL (61 aa)). The chain crosses the membrane as a helical span at residues 621–641 (FLKFVSFICGSFVAILAFLTV). Over 642-656 (FDPENFLNFEITSDR) the chain is Lumenal. Position 657 is a phosphoserine (Ser-657). Residues 657-677 (SVIFYITILGAIWSVSRNTIT) form a helical membrane-spanning segment. Residues 678–723 (QEYHVFDPEETLKELYEYTHYLPKEWEGRYHKEEIKLEFCKLYNLR) lie on the Cytoplasmic side of the membrane. Lys-701 participates in a covalent cross-link: Glycyl lysine isopeptide (Lys-Gly) (interchain with G-Cter in ubiquitin). The stretch at 724–744 (IVILLRELTSLMITPFVLWFS) is an intramembrane region. Residues 745 to 997 (LPSSAGRIVD…EYYKKSDVGR (253 aa)) lie on the Cytoplasmic side of the membrane. Ser-787 and Ser-792 each carry phosphoserine. Phosphothreonine is present on Thr-794. The residue at position 802 (Ser-802) is a Phosphoserine. Residue Thr-804 is modified to Phosphothreonine. Phosphoserine is present on residues Ser-831, Ser-842, Ser-864, Ser-948, and Ser-969.

The protein belongs to the ATG9 family. Homotrimer; forms a homotrimer with a central pore that forms a path between the two membrane leaflets. Interacts with ATG23 and ATG27 to form a cycling complex for trafficking to the PAS. Interacts (via N-terminus) with ATG11, required for recruitment of ATG9 to the PAS for the Cvt pathway during nutrient-rich conditions. Interacts (via N-terminus) with ATG17; required for recruitment to the PAS during autophagy and starved conditions. Interacts with ATG2 and ATG18; required for the retrieval of ATG9 from the PAS to the cytoplasmic pool. Interacts with ATG41. Interacts with the conserved oligomeric Golgi (COG) complex subunits COG3 and COG4. Interacts with TRS85. In terms of processing, phosphorylated by ATG1; phosphorylation is required for autophagy and cytoplasm to vacuole transport (Cvt) vesicle formation. Phosphorylation by ATG1 regulates ATG18 interaction and preautophagosome elongation. Phosphorylation at Ser-122 is required for selective autophagy by regulating anterograde trafficking and interaction with ATG23 and ATG27. Phosphorylation at Ser-122 prevents ubiquitination by the SCF(MET30) complex. Post-translationally, ubiquitinated by the SCF(MET30) complex in normal conditions, leading to its degradation by the proteasome, thereby preventing inappropriate induction of autophagy. Ubiquitination by the SCF(MET30) complex is prevented by phosphorylation at Ser-122.

It localises to the preautophagosomal structure membrane. The protein localises to the cytoplasmic vesicle membrane. It is found in the golgi apparatus membrane. The protein resides in the endoplasmic reticulum membrane. Its subcellular location is the mitochondrion membrane. The enzyme catalyses a 1,2-diacyl-sn-glycero-3-phosphocholine(in) = a 1,2-diacyl-sn-glycero-3-phosphocholine(out). It catalyses the reaction a 1,2-diacyl-sn-glycero-3-phospho-L-serine(in) = a 1,2-diacyl-sn-glycero-3-phospho-L-serine(out). It carries out the reaction a 1,2-diacyl-sn-glycero-3-phosphoethanolamine(in) = a 1,2-diacyl-sn-glycero-3-phosphoethanolamine(out). The catalysed reaction is a 1,2-diacyl-sn-glycero-3-phospho-(1D-myo-inositol-3-phosphate)(in) = a 1,2-diacyl-sn-glycero-3-phospho-(1D-myo-inositol-3-phosphate)(out). Its function is as follows. Phospholipid scramblase involved in autophagy and cytoplasm to vacuole transport (Cvt) vesicle formation. Cycles between the preautophagosomal structure/phagophore assembly site (PAS) and the cytoplasmic vesicle pool and supplies membrane for the growing autophagosome. Lipid scramblase activity plays a key role in preautophagosomal structure/phagophore assembly by distributing the phospholipids that arrive through ATG2 from the cytoplasmic to the luminal leaflet of the bilayer, thereby driving autophagosomal membrane expansion. Required for mitophagy. Also involved in endoplasmic reticulum-specific autophagic process and is essential for the survival of cells subjected to severe ER stress. Different machineries are required for anterograde trafficking to the PAS during either the Cvt pathway or bulk autophagy and for retrograde trafficking. Recruits vesicle-tethering proteins TRS85 and YPT1 to the autophagosome formation site. Also recruits ATG23 and ATG8 to the PAS. The protein is Autophagy-related protein 9 of Saccharomyces cerevisiae (strain YJM789) (Baker's yeast).